Reading from the N-terminus, the 245-residue chain is tRNA (guanine-N(7)-)-methyltransferase (245 aa).

S-adenosyl-L-methionine contacts are provided by Glu69, Glu94, Asp121, and Asp144. Asp144 is an active-site residue. Substrate contacts are provided by residues Lys148, Asp180, and 217 to 220 (TKFE). A disordered region spans residues 200-225 (NLSSSGDYVPRPENRPKTKFERRGEG). The span at 209–225 (PRPENRPKTKFERRGEG) shows a compositional bias: basic and acidic residues.

This sequence belongs to the class I-like SAM-binding methyltransferase superfamily. TrmB family.

The enzyme catalyses guanosine(46) in tRNA + S-adenosyl-L-methionine = N(7)-methylguanosine(46) in tRNA + S-adenosyl-L-homocysteine. Its pathway is tRNA modification; N(7)-methylguanine-tRNA biosynthesis. Its function is as follows. Catalyzes the formation of N(7)-methylguanine at position 46 (m7G46) in tRNA. The chain is tRNA (guanine-N(7)-)-methyltransferase from Idiomarina loihiensis (strain ATCC BAA-735 / DSM 15497 / L2-TR).